The primary structure comprises 133 residues: T-cell receptor beta chain V region 86T1 (133 aa).

The first 21 residues, 1–21 (MSCRLLLYVSLCLVETALMNT), serve as a signal peptide directing secretion. The segment at 22-113 (KITQSPRYLI…SAVYFCASSH (92 aa)) is v segment. N-linked (GlcNAc...) asparagine glycans are attached at residues Asn36 and Asn75. A disulfide bridge links Cys41 with Cys109. The j segment stretch occupies residues 114–133 (GQGVSGNTLYFGEGSRLIVV).

In Mus musculus (Mouse), this protein is T-cell receptor beta chain V region 86T1.